The sequence spans 309 residues: 4-hydroxy-3-methylbut-2-enyl diphosphate reductase (309 aa).

[4Fe-4S] cluster is bound at residue C12. (2E)-4-hydroxy-3-methylbut-2-enyl diphosphate-binding residues include H41 and H74. 2 residues coordinate dimethylallyl diphosphate: H41 and H74. Isopentenyl diphosphate contacts are provided by H41 and H74. C96 provides a ligand contact to [4Fe-4S] cluster. H124 provides a ligand contact to (2E)-4-hydroxy-3-methylbut-2-enyl diphosphate. Residue H124 coordinates dimethylallyl diphosphate. Residue H124 participates in isopentenyl diphosphate binding. The active-site Proton donor is the E126. Residue T167 coordinates (2E)-4-hydroxy-3-methylbut-2-enyl diphosphate. A [4Fe-4S] cluster-binding site is contributed by C197. (2E)-4-hydroxy-3-methylbut-2-enyl diphosphate-binding residues include S225, S226, N227, and S269. The dimethylallyl diphosphate site is built by S225, S226, N227, and S269. Positions 225, 226, 227, and 269 each coordinate isopentenyl diphosphate.

This sequence belongs to the IspH family. Requires [4Fe-4S] cluster as cofactor.

It carries out the reaction isopentenyl diphosphate + 2 oxidized [2Fe-2S]-[ferredoxin] + H2O = (2E)-4-hydroxy-3-methylbut-2-enyl diphosphate + 2 reduced [2Fe-2S]-[ferredoxin] + 2 H(+). It catalyses the reaction dimethylallyl diphosphate + 2 oxidized [2Fe-2S]-[ferredoxin] + H2O = (2E)-4-hydroxy-3-methylbut-2-enyl diphosphate + 2 reduced [2Fe-2S]-[ferredoxin] + 2 H(+). It functions in the pathway isoprenoid biosynthesis; dimethylallyl diphosphate biosynthesis; dimethylallyl diphosphate from (2E)-4-hydroxy-3-methylbutenyl diphosphate: step 1/1. It participates in isoprenoid biosynthesis; isopentenyl diphosphate biosynthesis via DXP pathway; isopentenyl diphosphate from 1-deoxy-D-xylulose 5-phosphate: step 6/6. Functionally, catalyzes the conversion of 1-hydroxy-2-methyl-2-(E)-butenyl 4-diphosphate (HMBPP) into a mixture of isopentenyl diphosphate (IPP) and dimethylallyl diphosphate (DMAPP). Acts in the terminal step of the DOXP/MEP pathway for isoprenoid precursor biosynthesis. The chain is 4-hydroxy-3-methylbut-2-enyl diphosphate reductase from Colwellia psychrerythraea (strain 34H / ATCC BAA-681) (Vibrio psychroerythus).